Here is a 198-residue protein sequence, read N- to C-terminus: ATP-dependent Clp protease proteolytic subunit (198 aa).

S98 functions as the Nucleophile in the catalytic mechanism. H123 is an active-site residue.

The protein belongs to the peptidase S14 family. As to quaternary structure, fourteen ClpP subunits assemble into 2 heptameric rings which stack back to back to give a disk-like structure with a central cavity, resembling the structure of eukaryotic proteasomes.

The protein localises to the cytoplasm. It carries out the reaction Hydrolysis of proteins to small peptides in the presence of ATP and magnesium. alpha-casein is the usual test substrate. In the absence of ATP, only oligopeptides shorter than five residues are hydrolyzed (such as succinyl-Leu-Tyr-|-NHMec, and Leu-Tyr-Leu-|-Tyr-Trp, in which cleavage of the -Tyr-|-Leu- and -Tyr-|-Trp bonds also occurs).. Functionally, cleaves peptides in various proteins in a process that requires ATP hydrolysis. Has a chymotrypsin-like activity. Plays a major role in the degradation of misfolded proteins. This is ATP-dependent Clp protease proteolytic subunit from Bacillus velezensis (strain DSM 23117 / BGSC 10A6 / LMG 26770 / FZB42) (Bacillus amyloliquefaciens subsp. plantarum).